Reading from the N-terminus, the 341-residue chain is Ribosomal RNA small subunit methyltransferase H (341 aa).

S-adenosyl-L-methionine-binding positions include 47 to 49 (GGY), D64, F91, D109, and Q116.

It belongs to the methyltransferase superfamily. RsmH family.

Its subcellular location is the cytoplasm. The enzyme catalyses cytidine(1402) in 16S rRNA + S-adenosyl-L-methionine = N(4)-methylcytidine(1402) in 16S rRNA + S-adenosyl-L-homocysteine + H(+). Its function is as follows. Specifically methylates the N4 position of cytidine in position 1402 (C1402) of 16S rRNA. The protein is Ribosomal RNA small subunit methyltransferase H of Agrobacterium fabrum (strain C58 / ATCC 33970) (Agrobacterium tumefaciens (strain C58)).